A 241-amino-acid polypeptide reads, in one-letter code: MATNAKPVYQRILLKLSGEALQGAEGFGIDASVLDRMAQEVKELVELGIQVGVVIGGGNLFRGAGLAQAGMNRVVGDHMGMLATVMNGLAMRDALHRAYVNARLMSAIPLNGVCDNYSWAEAISLLRNNRVVIFSAGTGNPFFTTDSAACLRGIEIEADVVLKATKVDGVYSADPVKNPDATLYEHITYQDVLERELKVMDLAAFTLARDHGLPIRVFNMNKPGALRRVVMGENEGTLISK.

15-18 (KLSG) is a binding site for ATP. The involved in allosteric activation by GTP stretch occupies residues 23–28 (GAEGFG). Gly57 is a binding site for UMP. ATP contacts are provided by Gly58 and Arg62. UMP is bound by residues Asp77 and 138–145 (TGNPFFTT). Residues Thr165, Tyr171, and Asp174 each contribute to the ATP site.

This sequence belongs to the UMP kinase family. Homohexamer.

Its subcellular location is the cytoplasm. It carries out the reaction UMP + ATP = UDP + ADP. It functions in the pathway pyrimidine metabolism; CTP biosynthesis via de novo pathway; UDP from UMP (UMPK route): step 1/1. Allosterically activated by GTP. Inhibited by UTP. Its function is as follows. Catalyzes the reversible phosphorylation of UMP to UDP. The polypeptide is Uridylate kinase (Serratia proteamaculans (strain 568)).